The following is a 150-amino-acid chain: Large ribosomal subunit protein uL23 (150 aa).

Positions 1–24 are disordered; that stretch reads MNKENKTQAVNKAKNTAKVAKKGS. A compositionally biased stretch (low complexity) spans 7 to 18; it reads TQAVNKAKNTAK.

This sequence belongs to the universal ribosomal protein uL23 family.

This chain is Large ribosomal subunit protein uL23 (RPL23A), found in Tetrahymena thermophila (strain SB210).